Reading from the N-terminus, the 907-residue chain is Protein translocase subunit SecA (907 aa).

ATP contacts are provided by residues Gln87, 105–109 (GEGKT), and Asp512. Positions 891, 893, 902, and 903 each coordinate Zn(2+).

The protein belongs to the SecA family. In terms of assembly, monomer and homodimer. Part of the essential Sec protein translocation apparatus which comprises SecA, SecYEG and auxiliary proteins SecDF-YajC and YidC. Zn(2+) is required as a cofactor.

Its subcellular location is the cell inner membrane. The protein resides in the cytoplasm. It carries out the reaction ATP + H2O + cellular proteinSide 1 = ADP + phosphate + cellular proteinSide 2.. Part of the Sec protein translocase complex. Interacts with the SecYEG preprotein conducting channel. Has a central role in coupling the hydrolysis of ATP to the transfer of proteins into and across the cell membrane, serving both as a receptor for the preprotein-SecB complex and as an ATP-driven molecular motor driving the stepwise translocation of polypeptide chains across the membrane. This chain is Protein translocase subunit SecA, found in Tolumonas auensis (strain DSM 9187 / NBRC 110442 / TA 4).